Here is a 252-residue protein sequence, read N- to C-terminus: 5-oxoprolinase subunit A (252 aa).

It belongs to the LamB/PxpA family. In terms of assembly, forms a complex composed of PxpA, PxpB and PxpC.

The catalysed reaction is 5-oxo-L-proline + ATP + 2 H2O = L-glutamate + ADP + phosphate + H(+). Catalyzes the cleavage of 5-oxoproline to form L-glutamate coupled to the hydrolysis of ATP to ADP and inorganic phosphate. This is 5-oxoprolinase subunit A from Staphylococcus epidermidis (strain ATCC 35984 / DSM 28319 / BCRC 17069 / CCUG 31568 / BM 3577 / RP62A).